A 228-amino-acid chain; its full sequence is ATP synthase subunit beta, mitochondrial (228 aa).

The transit peptide at 1–31 directs the protein to the mitochondrion; it reads MFALRAAAKADKNLLPFLGQLSRSHAAKAAK. 183–190 is a binding site for ATP; the sequence is GGAGVGKT.

It belongs to the ATPase alpha/beta chains family. As to quaternary structure, F-type ATPases have 2 components, CF(1) - the catalytic core - and CF(0) - the membrane proton channel. CF(1) has five subunits: alpha(3), beta(3), gamma(1), delta(1), epsilon(1). CF(0) has three main subunits: a, b and c.

The protein localises to the mitochondrion. Its subcellular location is the mitochondrion inner membrane. The enzyme catalyses ATP + H2O + 4 H(+)(in) = ADP + phosphate + 5 H(+)(out). Functionally, mitochondrial membrane ATP synthase (F(1)F(0) ATP synthase or Complex V) produces ATP from ADP in the presence of a proton gradient across the membrane which is generated by electron transport complexes of the respiratory chain. F-type ATPases consist of two structural domains, F(1) - containing the extramembraneous catalytic core, and F(0) - containing the membrane proton channel, linked together by a central stalk and a peripheral stalk. During catalysis, ATP synthesis in the catalytic domain of F(1) is coupled via a rotary mechanism of the central stalk subunits to proton translocation. Subunits alpha and beta form the catalytic core in F(1). Rotation of the central stalk against the surrounding alpha(3)beta(3) subunits leads to hydrolysis of ATP in three separate catalytic sites on the beta subunits. The sequence is that of ATP synthase subunit beta, mitochondrial from Drosophila virilis (Fruit fly).